A 126-amino-acid chain; its full sequence is Small ribosomal subunit protein uS12 (126 aa).

D89 carries the 3-methylthioaspartic acid modification. The tract at residues 99–126 (RGSLDTSGVNDRKQGRSKYGTKKPKDKK) is disordered. Residues 113–126 (GRSKYGTKKPKDKK) show a composition bias toward basic residues.

Belongs to the universal ribosomal protein uS12 family. As to quaternary structure, part of the 30S ribosomal subunit. Contacts proteins S8 and S17. May interact with IF1 in the 30S initiation complex.

In terms of biological role, with S4 and S5 plays an important role in translational accuracy. Interacts with and stabilizes bases of the 16S rRNA that are involved in tRNA selection in the A site and with the mRNA backbone. Located at the interface of the 30S and 50S subunits, it traverses the body of the 30S subunit contacting proteins on the other side and probably holding the rRNA structure together. The combined cluster of proteins S8, S12 and S17 appears to hold together the shoulder and platform of the 30S subunit. This Legionella pneumophila (strain Paris) protein is Small ribosomal subunit protein uS12.